Here is a 59-residue protein sequence, read N- to C-terminus: Large ribosomal subunit protein bL32 (59 aa).

Belongs to the bacterial ribosomal protein bL32 family.

The protein is Large ribosomal subunit protein bL32 of Rhizorhabdus wittichii (strain DSM 6014 / CCUG 31198 / JCM 15750 / NBRC 105917 / EY 4224 / RW1) (Sphingomonas wittichii).